A 405-amino-acid chain; its full sequence is Low-salt glycan biosynthesis sulfotransferase Agl7 (405 aa).

3 residues coordinate Ca(2+): Asp-24, Asp-201, and His-202.

This sequence belongs to the sulfatase family. The cofactor is Ca(2+).

Its pathway is protein modification; protein glycosylation. It functions in the pathway cell surface structure biogenesis; S-layer biogenesis. Involved in N-glycan biosynthetic pathway that takes place under low-salt conditions (1.75 M instead of 3.4 M). Participates in the formation of the tetrasaccharide present at 'Asn-532' of S-layer glycoprotein Csg, consisting of a sulfated hexose, 2 hexoses and rhamnose. Mediates sulfation of sugar 1 in the tetrasaccharide. This chain is Low-salt glycan biosynthesis sulfotransferase Agl7, found in Haloferax volcanii (strain ATCC 29605 / DSM 3757 / JCM 8879 / NBRC 14742 / NCIMB 2012 / VKM B-1768 / DS2) (Halobacterium volcanii).